The following is a 242-amino-acid chain: Methylthioribulose-1-phosphate dehydratase (242 aa).

The segment at Met-1–His-23 is disordered. Residue Cys-102 participates in substrate binding. 2 residues coordinate Zn(2+): His-119 and His-121. The active-site Proton donor/acceptor is the Glu-148. His-204 contributes to the Zn(2+) binding site.

Belongs to the aldolase class II family. MtnB subfamily. Zn(2+) serves as cofactor.

The protein resides in the cytoplasm. The enzyme catalyses 5-(methylsulfanyl)-D-ribulose 1-phosphate = 5-methylsulfanyl-2,3-dioxopentyl phosphate + H2O. Its pathway is amino-acid biosynthesis; L-methionine biosynthesis via salvage pathway; L-methionine from S-methyl-5-thio-alpha-D-ribose 1-phosphate: step 2/6. Catalyzes the dehydration of methylthioribulose-1-phosphate (MTRu-1-P) into 2,3-diketo-5-methylthiopentyl-1-phosphate (DK-MTP-1-P). This is Methylthioribulose-1-phosphate dehydratase from Uncinocarpus reesii (strain UAMH 1704).